The primary structure comprises 229 residues: Uracil-DNA glycosylase (229 aa).

Asp64 functions as the Proton acceptor in the catalytic mechanism.

This sequence belongs to the uracil-DNA glycosylase (UDG) superfamily. UNG family.

It is found in the cytoplasm. The enzyme catalyses Hydrolyzes single-stranded DNA or mismatched double-stranded DNA and polynucleotides, releasing free uracil.. In terms of biological role, excises uracil residues from the DNA which can arise as a result of misincorporation of dUMP residues by DNA polymerase or due to deamination of cytosine. This Geobacillus kaustophilus (strain HTA426) protein is Uracil-DNA glycosylase.